The chain runs to 337 residues: Glyceraldehyde-3-phosphate dehydrogenase (337 aa).

NAD(+)-binding positions include 13–14 (RI), aspartate 35, and lysine 80. D-glyceraldehyde 3-phosphate-binding positions include 151 to 153 (SCT), threonine 182, 211 to 212 (TG), and arginine 234. Cysteine 152 serves as the catalytic Nucleophile. Asparagine 316 contributes to the NAD(+) binding site.

It belongs to the glyceraldehyde-3-phosphate dehydrogenase family. As to quaternary structure, homotetramer.

The protein localises to the cytoplasm. It catalyses the reaction D-glyceraldehyde 3-phosphate + phosphate + NAD(+) = (2R)-3-phospho-glyceroyl phosphate + NADH + H(+). It functions in the pathway carbohydrate degradation; glycolysis; pyruvate from D-glyceraldehyde 3-phosphate: step 1/5. This chain is Glyceraldehyde-3-phosphate dehydrogenase (GAPD), found in Mycosarcoma maydis (Corn smut fungus).